The following is a 217-amino-acid chain: uncharacterized protein (217 aa).

The segment covering 59 to 76 (AQSTIQRTSSLPVPSSSN) has biased composition (polar residues). Disordered regions lie at residues 59-105 (AQST…ETAN) and 124-217 (KKSL…HISK). The residue at position 68 (Ser68) is a Phosphoserine. Thr92 is subject to Phosphothreonine. Over residues 124–135 (KKSLERRVREEQ) the composition is skewed to basic and acidic residues. The segment covering 136-147 (EEKTDNEDDNDV) has biased composition (acidic residues). A compositionally biased stretch (polar residues) spans 148–157 (EISTQESLEN). A compositionally biased stretch (acidic residues) spans 173-188 (LEDDIEGQEFSFDDQD). Over residues 199–217 (WLSSQKQQGSPLTSDHISK) the composition is skewed to polar residues.

This is an uncharacterized protein from Schizosaccharomyces pombe (strain 972 / ATCC 24843) (Fission yeast).